The chain runs to 181 residues: Caltractin ICL1d (181 aa).

Residues 1–29 (MARRGQQPPPQQAPPAQKNQTGKFNPAEF) form a disordered region. EF-hand domains follow at residues 37-72 (EEVL…LGFE), 73-108 (AKNQ…RISE), 110-145 (DSKA…LGET), and 146-181 (MDDS…KTFA). Residues D50, D52, T54, S56, E61, D86, D88, S90, Q92, and E97 each coordinate Ca(2+).

Belongs to the centrin family. As to quaternary structure, monomer.

It is found in the cytoplasm. The protein resides in the cytoskeleton. Plays a fundamental role in microtubule organizing center structure and function. Component of the infraciliary lattice (ICL) and the ciliary basal bodies. The polypeptide is Caltractin ICL1d (Icl1d) (Paramecium tetraurelia).